Here is a 442-residue protein sequence, read N- to C-terminus: UBX domain-containing protein 6 (442 aa).

Residues 1 to 10 (MKKFFQEIKA) are mediates interaction with LMAN1. The tract at residues 13 to 111 (KFKSAGPGQK…TNSVPEPKEE (99 aa)) is disordered. Ser36 bears the Phosphoserine mark. The VCP/p97-interacting motif (VIM) stretch occupies residues 51-63 (EAQMAAAAALARL). Low complexity predominate over residues 52–61 (AQMAAAAALA). Over residues 90-105 (EATSSNNPGAPGTNSV) the composition is skewed to polar residues. Residues 175–244 (VDTIAKYLDN…GQEEFYVLGE (70 aa)) enclose the PUB domain. One can recognise a UBX domain in the interval 332-408 (RKYTYALVRV…GLVPSALLTF (77 aa)).

As to quaternary structure, interacts with VCP through the PUB domain (via C-terminus) and VIM motif (via N-terminus); the interaction is direct. Forms a ternary complex with CAV1 and VCP. Interacts with SYVN1. Interacts with HERPUD1. Interacts with VCPKMT. May interact with DERL1. Interacts with PLAA, VCP and YOD1; may form a complex involved in macroautophagy. Interacts with LMAN1. As to expression, widely expressed (at protein level). Highest expression in brain (at protein level).

It is found in the cytoplasm. The protein resides in the cytosol. The protein localises to the membrane. Its subcellular location is the nucleus. It localises to the cytoskeleton. It is found in the microtubule organizing center. The protein resides in the centrosome. The protein localises to the early endosome membrane. Its subcellular location is the late endosome membrane. It localises to the lysosome membrane. Functionally, may negatively regulate the ATPase activity of VCP, an ATP-driven segregase that associates with different cofactors to control a wide variety of cellular processes. As a cofactor of VCP, it may play a role in the transport of CAV1 to lysosomes for degradation. It may also play a role in endoplasmic reticulum-associated degradation (ERAD) of misfolded proteins. Together with VCP and other cofactors, it may play a role in macroautophagy, regulating for instance the clearance of damaged lysosomes. This chain is UBX domain-containing protein 6, found in Mus musculus (Mouse).